The primary structure comprises 231 residues: uncharacterized protein (231 aa).

Residue 10-34 (IITGASSGIGAATAKALEKQGVKVV) participates in NADP(+) binding. A substrate-binding site is contributed by Ser-140. Residue Tyr-153 is the Proton acceptor of the active site.

Belongs to the short-chain dehydrogenases/reductases (SDR) family.

This is an uncharacterized protein from Staphylococcus haemolyticus (strain JCSC1435).